The sequence spans 474 residues: Replication factor C large subunit (474 aa).

Position 45-52 (45-52 (GPPGCGKT)) interacts with ATP. The span at 415 to 468 (DKKTNNKKGKENKTKNTTKKIKEIKETPKKEEVKEPKKQIEKQKSEKKEPKKQM) shows a compositional bias: basic and acidic residues. The tract at residues 415–474 (DKKTNNKKGKENKTKNTTKKIKEIKETPKKEEVKEPKKQIEKQKSEKKEPKKQMTLESFF) is disordered.

Belongs to the activator 1 small subunits family. RfcL subfamily. Heteromultimer composed of small subunits (RfcS) and large subunits (RfcL).

Functionally, part of the RFC clamp loader complex which loads the PCNA sliding clamp onto DNA. The chain is Replication factor C large subunit from Methanococcus aeolicus (strain ATCC BAA-1280 / DSM 17508 / OCM 812 / Nankai-3).